The sequence spans 394 residues: E3 ubiquitin-protein ligase RNF149 (394 aa).

Residues Met-1–Gly-31 form the signal peptide. N-linked (GlcNAc...) asparagine glycosylation is found at Asn-51 and Asn-141. A PA domain is found at Ser-66–Val-171. Residues Val-197–Phe-217 traverse the membrane as a helical segment. Residues Cys-265–Lys-306 form an RING-type; atypical zinc finger. The segment at Asp-321–Cys-394 is disordered. Residue Thr-327 is modified to Phosphothreonine. Asn-339 carries an N-linked (GlcNAc...) asparagine glycan. Phosphoserine is present on residues Ser-341 and Ser-344. Positions Ser-352–Ser-362 are enriched in low complexity.

It is found in the membrane. The catalysed reaction is S-ubiquitinyl-[E2 ubiquitin-conjugating enzyme]-L-cysteine + [acceptor protein]-L-lysine = [E2 ubiquitin-conjugating enzyme]-L-cysteine + N(6)-ubiquitinyl-[acceptor protein]-L-lysine.. Its pathway is protein modification; protein ubiquitination. E3 ubiquitin-protein ligase. Ubiquitinates BRAF, inducing its proteasomal degradation. This is E3 ubiquitin-protein ligase RNF149 (Rnf149) from Mus musculus (Mouse).